Reading from the N-terminus, the 262-residue chain is Flap endonuclease Xni (262 aa).

Asp-109 provides a ligand contact to Mg(2+). One can recognise a 5'-3' exonuclease domain in the interval 165–255 (LKPEQLADYW…FNLQDIRYEK (91 aa)). The K(+) site is built by Leu-176, Ala-177, Ile-187, and Val-190. An interaction with DNA region spans residues 189-194 (GVGPKA).

Belongs to the Xni family. Requires Mg(2+) as cofactor. K(+) is required as a cofactor.

In terms of biological role, has flap endonuclease activity. During DNA replication, flap endonucleases cleave the 5'-overhanging flap structure that is generated by displacement synthesis when DNA polymerase encounters the 5'-end of a downstream Okazaki fragment. The chain is Flap endonuclease Xni from Aliivibrio fischeri (strain MJ11) (Vibrio fischeri).